Reading from the N-terminus, the 899-residue chain is Bifunctional uridylyltransferase/uridylyl-removing enzyme (899 aa).

Positions 1-342 are uridylyltransferase; that stretch reads MPQVDPDLFD…PGDAAGRVEP (342 aa). Residues 343 to 705 form a uridylyl-removing region; it reads LNERFQVRDG…TTQREFEGAT (363 aa). The HD domain occupies 461–583; that stretch reads VDAHTLNLIK…VRDQTYLDYL (123 aa). 2 consecutive ACT domains span residues 706–789 and 816–899; these read QIFI…IIQR and ILEI…RISI.

It belongs to the GlnD family. It depends on Mg(2+) as a cofactor.

The enzyme catalyses [protein-PII]-L-tyrosine + UTP = [protein-PII]-uridylyl-L-tyrosine + diphosphate. It carries out the reaction [protein-PII]-uridylyl-L-tyrosine + H2O = [protein-PII]-L-tyrosine + UMP + H(+). Its activity is regulated as follows. Uridylyltransferase (UTase) activity is inhibited by glutamine, while glutamine activates uridylyl-removing (UR) activity. Modifies, by uridylylation and deuridylylation, the PII regulatory proteins (GlnB and homologs), in response to the nitrogen status of the cell that GlnD senses through the glutamine level. Under low glutamine levels, catalyzes the conversion of the PII proteins and UTP to PII-UMP and PPi, while under higher glutamine levels, GlnD hydrolyzes PII-UMP to PII and UMP (deuridylylation). Thus, controls uridylylation state and activity of the PII proteins, and plays an important role in the regulation of nitrogen fixation and metabolism. This Azotobacter vinelandii (strain DJ / ATCC BAA-1303) protein is Bifunctional uridylyltransferase/uridylyl-removing enzyme.